A 611-amino-acid polypeptide reads, in one-letter code: ANK repeat-containing protein nipk-1 (611 aa).

The stretch at 91–149 (NSKSKKKTENQETKEKDEEAEEKKDGPPKDDKELKMKKEKEQEDENAELDEQKKDGDLL) forms a coiled coil. 3 disordered regions span residues 92–167 (SKSK…SHPY), 212–255 (ISAS…DTSR), and 280–333 (TKEE…LSPR). A compositionally biased stretch (basic and acidic residues) spans 97 to 131 (KTENQETKEKDEEAEEKKDGPPKDDKELKMKKEKE). 3 stretches are compositionally biased toward polar residues: residues 212-223 (ISASTTPDTVLS), 239-255 (ESLQSPFSDISSADTSR), and 315-333 (GTCSGPTTPSFNQTRLSPR). 5 ANK repeats span residues 375–405 (DGDTPLHIVAAHNDLGKIYALCETLRKTMNE), 417–446 (FGETPLYVAVLQRSIEVVEYLLELGASPNS), 452–482 (VGDSPLHFATARGMNNMVEALLSKREIRVNE), 486–527 (DGQT…DPTI), and 532–561 (TGKTIVHHAVDKMDVELLDFLKTVVNEDTF).

The protein belongs to the iASPP family. Expressed in the nervous system.

Functionally, acts downstream of the receptor complex composed of ilcr-1 and ilcr-2, which is a signaling complex that modulates neuronal activity and animal behavior in response to sensory neuron input. Mediates signaling of the complex. This is ANK repeat-containing protein nipk-1 from Caenorhabditis elegans.